Here is a 622-residue protein sequence, read N- to C-terminus: Low affinity potassium transport system protein Kup (622 aa).

The next 12 membrane-spanning stretches (helical) occupy residues 12–32 (ITLA…LYTL), 49–69 (VFGF…LKYL), 101–121 (FLVI…VITP), 134–154 (IIAP…LTLL), 163–183 (GLVG…LAAL), 213–233 (VSFV…ALYA), 247–267 (WFTV…ALLL), 276–296 (PFFL…ATLA), 337–357 (IYIP…IVSF), 363–383 (LAAA…ILST), 395–415 (FLVA…FSAN), and 419–439 (IVSG…VMTT).

Belongs to the HAK/KUP transporter (TC 2.A.72) family.

The protein localises to the cell inner membrane. It carries out the reaction K(+)(in) + H(+)(in) = K(+)(out) + H(+)(out). Responsible for the low-affinity transport of potassium into the cell. Likely operates as a K(+):H(+) symporter. The protein is Low affinity potassium transport system protein Kup of Enterobacter sp. (strain 638).